Reading from the N-terminus, the 914-residue chain is Golgin candidate 6 (914 aa).

Coiled coils occupy residues 723 to 837 (IEKQ…SLKG) and 863 to 901 (EDEL…LEDI). At serine 911 the chain carries Phosphoserine.

The protein resides in the golgi apparatus. It localises to the golgi stack. Functionally, golgi matrix protein playing a role in tethering of vesicles to Golgi membranes and in maintaining the overall structure of the Golgi apparatus. Functions in the anterograde transport of storage protein precursors from the endoplasmic reticulum (ER) to the Golgi complex. This chain is Golgin candidate 6 (GC6), found in Arabidopsis thaliana (Mouse-ear cress).